The sequence spans 631 residues: MTQPQMAPICLVENHNEQLSVNQEAIEILDKISQPVVVVAIVGWSHTGKSYLMNCLAGQNHVSGTLPTSQRFPSGLHRAVSDQGHLDVVHAPPHQARALVLLDTEGLGDVEKGDPKNDLWIFALSVLLSSTFVYNSMNTINHQALEQLHYVTELTELIRAKSSPNPHGIKNSTEFVSFFPDFVWTVRDFMLELKLNGEDITSDEYLENALKLIPGNNPRIQASNSARECIRRFFPNRKCFVFEWPTHDIELIKQLETISEDQLDPTFKESAMAFASYIFTYAKIKTLREGIKVTGNGLGTLVTTYVDAINSGAVPCLDDAVTTLAQRENSVAVQKAASHYSEQMAQRLSLPTDTIQELLDVHAACEKEAMAVFMEHSFKDENQQFLKKLVELLREKNGLFLLKNEEASDKYCQEELDRLSKDLMDNISTFSVPGGHRLYMDMREKIEHDYWQVPRKGVKASEVFQNFLQSQAIIESSILQADTALTAGQKAIAEKHTKKEAAEKEQDLLRQKQKEHQEYMEAQEKRNKENLEQLRRKLEQEREQLIKDHNMMLEKLTKEQKTFREEGYKTQAEELRREIHQLGHNIKEMKQNGDSLVESILRSWFSFISPPSESEKAISSVLSLLRKKDRL.

A GB1/RHD3-type G domain is found at 33–283; it reads SQPVVVVAIV…FASYIFTYAK (251 aa). Residues 43–50 and 103–107 contribute to the GTP site; these read GWSHTGKS and DTEGL. Residues 492-592 adopt a coiled-coil conformation; sequence IAEKHTKKEA…GHNIKEMKQN (101 aa).

Belongs to the TRAFAC class dynamin-like GTPase superfamily. GB1/RHD3 GTPase family. GB1 subfamily. In terms of assembly, heterodimer with other family members, including GBP1, GBP2 and GBP5. Dimerization regulates subcellular location. Interacts with IRF7; preventing interaction between TRAF6 and IRF7, resulting in impaired TRAF6-mediated IRF7 ubiquitination. Mainly expressed in organs of the immune system, such as spleen and lymph nodes.

Its subcellular location is the golgi apparatus membrane. The protein localises to the cytoplasm. It is found in the nucleus. The protein resides in the perinuclear region. It catalyses the reaction GTP + H2O = GDP + phosphate + H(+). In terms of biological role, interferon (IFN)-inducible GTPase that plays important roles in innate immunity against a diverse range of bacterial, viral and protozoan pathogens. Negatively regulates the antiviral response by inhibiting activation of IRF7 transcription factor. The sequence is that of Guanylate-binding protein 4 from Mus musculus (Mouse).